The following is a 492-amino-acid chain: GDP-fucose protein O-fucosyltransferase 4 (492 aa).

Over 1–7 (MAAGPIR) the chain is Cytoplasmic. Residues 8–24 (VVLVLLGVLSVCAASGH) traverse the membrane as a helical; Signal-anchor for type II membrane protein segment. At 25-492 (GSVAEREAGG…HEIFMKRQHL (468 aa)) the chain is on the lumenal side. Residue Asn-166 is glycosylated (N-linked (GlcNAc...) asparagine). An intrachain disulfide couples Cys-389 to Cys-392. The N-linked (GlcNAc...) asparagine glycan is linked to Asn-443.

Belongs to the glycosyltransferase 10 family.

It is found in the endoplasmic reticulum membrane. The catalysed reaction is L-threonyl-[protein] + GDP-beta-L-fucose = 3-O-(alpha-L-fucosyl)-L-threonyl-[protein] + GDP + H(+). The enzyme catalyses L-seryl-[protein] + GDP-beta-L-fucose = 3-O-(alpha-L-fucosyl)-L-seryl-[protein] + GDP + H(+). Its pathway is protein modification; protein glycosylation. Its function is as follows. Protein O-fucosyltransferase that specifically catalyzes O-fucosylation of serine or threonine residues in EMI domains of target proteins, such as MMRN1, MMRN2 and EMID1. Attaches fucose through an O-glycosidic linkage. O-fucosylation of EMI domain-containing proteins may be required for facilitating protein folding and secretion. Also shows minor alpha-(1,3)-fucosyltransferase activity toward activity toward biantennary N-glycan acceptors. However, this was tested with a library of synthetic substrates and this activity is unsure in vivo. The polypeptide is GDP-fucose protein O-fucosyltransferase 4 (Homo sapiens (Human)).